The primary structure comprises 369 residues: tRNA/tmRNA (uracil-C(5))-methyltransferase (369 aa).

Residues Q190, Y218, N223, E239, and D301 each contribute to the S-adenosyl-L-methionine site. The active-site Nucleophile is C326. E360 functions as the Proton acceptor in the catalytic mechanism.

The protein belongs to the class I-like SAM-binding methyltransferase superfamily. RNA M5U methyltransferase family. TrmA subfamily.

The catalysed reaction is uridine(54) in tRNA + S-adenosyl-L-methionine = 5-methyluridine(54) in tRNA + S-adenosyl-L-homocysteine + H(+). It carries out the reaction uridine(341) in tmRNA + S-adenosyl-L-methionine = 5-methyluridine(341) in tmRNA + S-adenosyl-L-homocysteine + H(+). Its function is as follows. Dual-specificity methyltransferase that catalyzes the formation of 5-methyluridine at position 54 (m5U54) in all tRNAs, and that of position 341 (m5U341) in tmRNA (transfer-mRNA). This chain is tRNA/tmRNA (uracil-C(5))-methyltransferase, found in Vibrio vulnificus (strain CMCP6).